Here is a 227-residue protein sequence, read N- to C-terminus: Pyridoxine/pyridoxamine 5'-phosphate oxidase (227 aa).

Residues 23-26 and lysine 81 each bind substrate; that span reads RREY. FMN-binding positions include 76–81, 91–92, arginine 97, lysine 98, and glutamine 120; these read RIVLLK and YT. Substrate-binding residues include tyrosine 138, arginine 142, and serine 146. FMN-binding positions include 155–156 and tryptophan 200; that span reads QS. 206 to 208 serves as a coordination point for substrate; sequence RLH. Residue arginine 210 coordinates FMN.

The protein belongs to the pyridoxamine 5'-phosphate oxidase family. Homodimer. Requires FMN as cofactor.

It catalyses the reaction pyridoxamine 5'-phosphate + O2 + H2O = pyridoxal 5'-phosphate + H2O2 + NH4(+). The enzyme catalyses pyridoxine 5'-phosphate + O2 = pyridoxal 5'-phosphate + H2O2. It functions in the pathway cofactor metabolism; pyridoxal 5'-phosphate salvage; pyridoxal 5'-phosphate from pyridoxamine 5'-phosphate: step 1/1. It participates in cofactor metabolism; pyridoxal 5'-phosphate salvage; pyridoxal 5'-phosphate from pyridoxine 5'-phosphate: step 1/1. Catalyzes the oxidation of either pyridoxine 5'-phosphate (PNP) or pyridoxamine 5'-phosphate (PMP) into pyridoxal 5'-phosphate (PLP). The protein is Pyridoxine/pyridoxamine 5'-phosphate oxidase of Pectobacterium atrosepticum (strain SCRI 1043 / ATCC BAA-672) (Erwinia carotovora subsp. atroseptica).